The sequence spans 350 residues: Putative transport protein YdbI (350 aa).

8 helical membrane passes run 18–38, 67–87, 145–165, 207–227, 229–249, 257–277, 289–309, and 311–331; these read IFVV…LILL, VVIT…GFVF, ISTF…FLFE, FIIA…MHFP, LFGL…GVVI, IAYS…IFAI, LMSA…IFSE, and FFGI…LDIL.

Belongs to the autoinducer-2 exporter (AI-2E) (TC 2.A.86) family.

The protein resides in the cell membrane. The protein is Putative transport protein YdbI (ydbI) of Bacillus subtilis (strain 168).